Here is a 102-residue protein sequence, read N- to C-terminus: Circadian clock oscillator protein KaiB (102 aa).

This sequence belongs to the KaiB family. As to quaternary structure, undergoes a major conformational rearrangment; in the free state forms homotetramers with 2 dimers. When bound to the CI domain of KaiC switches to a monomeric thioredoxin-fold (KaiB(fs)). Monomers, homodimers and homotetramers are detected in solution; at low concentrations only monomers are seen. In vitro forms KaiC(6):KaiB(1) and KaiC(6):KaiB(6) complexes. Only associates with 'Ser-431'-phosphorylated KaiC (and not with doubly phosphorylated KaiC). Complex formation between KaiB and KaiC is regulated by the phosphorylation state of KaiC and by an ATP hydrolysis-driven conformation change in the CI ring of KaiC; complex formation is slow. Slow complex formation is crucial for the timing of the circadian period. In low resolution cryo-EM forms a KaiC(6):KaiB(6) complex. The KaiABC complex composition changes during the circadian cycle to control KaiC phosphorylation. Complexes KaiC(6), KaiA(2-4):KaiC(6), KaiB(6):KaiC(6) and KaiC(6):KaiB(6):KaiA(12) are among the most important forms, many form cooperatively. The KaiB:KaiC complex is more prevalent at 16 hours (in the dark) than at 4 hours (in the light) in the circadian cycle. The KaiA:KaiB complex is only found at 20-24 hours in the circadian cycle (subjective night). Binds to the CI domain of KaiC; SasA and KaiB compete to bind to the CI domain.

It is found in the cytoplasm. It localises to the cell membrane. Key component of the KaiABC oscillator complex, which constitutes the main circadian regulator in cyanobacteria. Complex composition changes during the circadian cycle to control KaiC phosphorylation. KaiA stimulates KaiC autophosphorylation, while KaiB sequesters KaiA, leading to KaiC autodephosphorylation. KaiA binding to the KaiC CII domain yields KaiA(2-4):KaiC(6) complexes which stimulate KaiC autophosphorylation. Phospho-Ser-431 KaiC accumulation triggers binding of KaiB to form the KaiB(6):KaiC(6) complex, leading to changes in the output regulators CikA and SasA. KaiB switches to a thioredoxin-like fold (KaiB(fs)) in complex with KaiC. KaiB(6):KaiC(6) formation exposes a site for KaiA binding that sequesters KaiA from the CII domain, making the KaiC(6):KaiB(6):KaiA(12) complex that results in KaiC autodephosphorylation. Complete dephosphorylation of KaiC leads to dissociation of KaiA(2):KaiB(1), completing 1 cycle of the Kai oscillator. Functionally, circadian oscillations can be generated in vitro by incubating KaiA, KaiB and KaiC with 1 mM ATP. The cycle is self-sustainable for at least 3 cycles and resistant to temperature changes. A very robust clock is reconstituted with KaiA, KaiB, KaiC, SasA, CikA and RpaA; output is measured by transcription from an appropriate reporter. In terms of biological role, a metamorphic protein which reversibly switches between an inactive tetrameric fold and a rare, thioredoxin-like monomeric fold (KaiB(fs)). KaiB(fs) binds phospho-KaiC, KaiA and CikA. KaiA and CikA compete for binding to KaiB(fs), and KaiB(fs) and SasA compete for binding to KaiC, thus the clock oscillator and output signal pathway are tightly coupled. The chain is Circadian clock oscillator protein KaiB from Synechococcus elongatus (strain ATCC 33912 / PCC 7942 / FACHB-805) (Anacystis nidulans R2).